We begin with the raw amino-acid sequence, 82 residues long: Probable acyl carrier protein IacP (82 aa).

The Carrier domain occupies 3–78; it reads MDIEARVKKV…DICRVVKKSL (76 aa). Ser-38 bears the O-(pantetheine 4'-phosphoryl)serine mark.

Post-translationally, 4'-phosphopantetheine is transferred from CoA to a specific serine of apo-IacP.

It localises to the cytoplasm. Functionally, acyl carrier protein. The protein is Probable acyl carrier protein IacP (iacP) of Salmonella typhimurium (strain SL1344).